We begin with the raw amino-acid sequence, 449 residues long: Glucose-6-phosphate isomerase (449 aa).

The active-site Proton donor is the E291. Catalysis depends on residues H312 and K426.

Belongs to the GPI family.

The protein localises to the cytoplasm. The enzyme catalyses alpha-D-glucose 6-phosphate = beta-D-fructose 6-phosphate. It functions in the pathway carbohydrate biosynthesis; gluconeogenesis. The protein operates within carbohydrate degradation; glycolysis; D-glyceraldehyde 3-phosphate and glycerone phosphate from D-glucose: step 2/4. In terms of biological role, catalyzes the reversible isomerization of glucose-6-phosphate to fructose-6-phosphate. The polypeptide is Glucose-6-phosphate isomerase (Streptococcus pyogenes serotype M3 (strain ATCC BAA-595 / MGAS315)).